A 480-amino-acid chain; its full sequence is Zinc finger protein ztf-16 (480 aa).

Residues 5 to 27 form a C2H2-type 1 zinc finger; it reads NACTECGFTTTVFSEFQGHIEKH. A disordered region spans residues 25-75; that stretch reads EKHENEHSRSSSGEMSNSQTIEWGDGIQSSTPSPRSTPPSDPTPSPDSDEH. Residues 34-45 show a composition bias toward polar residues; sequence SSSGEMSNSQTI. Pro residues predominate over residues 59–69; the sequence is RSTPPSDPTPS. C2H2-type zinc fingers lie at residues 103–125, 133–155, 161–183, 190–215, and 223–246; these read HVCP…LEAH, YQCD…RMRH, YECR…SMTH, FDCP…EETH, and ASCK…QTRH. 3 disordered regions span residues 243–275, 290–311, and 376–417; these read QTRH…MDPA, EFSP…DKIP, and TSSS…KEDE. A compositionally biased stretch (basic and acidic residues) spans 244–259; the sequence is TRHDDSESSPKKENTP. Low complexity-rich tracts occupy residues 292–305 and 376–403; these read SPPN…STSS and TSSS…SLSL. A compositionally biased stretch (basic and acidic residues) spans 404–413; that stretch reads TEKEKSPTPE. C2H2-type zinc fingers lie at residues 420–442 and 448–472; these read VECC…KSLH and FKCA…FADH.

Belongs to the Ikaros C2H2-type zinc-finger protein family. In terms of tissue distribution, expressed in the somatic gonad, hypodermis and cells in the head and tail. Expressed in amphid and phasmid sheath glia, amphid and phasmid socket glia, and in neurons in the head.

The protein resides in the nucleus. Functionally, positively regulates the expression of ver-1 in the amphid sheath glia of amphid sensory neurons. Together with ehn-3, plays a role in somatic gonad development and is required for proper gonadal primordium assembly and somatic gonad precursor cell morphology. In Caenorhabditis elegans, this protein is Zinc finger protein ztf-16.